The sequence spans 143 residues: Large ribosomal subunit protein bL17 (143 aa).

The protein belongs to the bacterial ribosomal protein bL17 family. Part of the 50S ribosomal subunit. Contacts protein L32.

The chain is Large ribosomal subunit protein bL17 from Bartonella quintana (strain Toulouse) (Rochalimaea quintana).